Consider the following 158-residue polypeptide: Glycine-rich RNA-binding protein 2, mitochondrial (158 aa).

A mitochondrion-targeting transit peptide spans 1-34; that stretch reads MAFCNKLGGLLRQNISSNGNVPVTSMLGSLRLMS. An RRM domain is found at 35-113; that stretch reads TKLFIGGLSW…RHIRVNPAND (79 aa). Serine 43 is subject to Phosphoserine. Residues 122 to 157 are glycine-rich (GR) required for cell-to-cell movement; sequence GGGGGYSGGGGGYGGGGGGYGGGGGGYGGGGDGGGG.

This sequence belongs to the GR-RBP family. In terms of assembly, binds to small phloem-mobile single-stranded RNAs (ss-sRNA, e.g. small interfering RNA (siRNA) and microRNA (miRNA)) in the phloeme exudate, including viral-derived sRNA (vsiRNA). Interacts with ORRM2, RBG3/ORRM3 and RBG5/ORRM4.

Its subcellular location is the mitochondrion. The protein resides in the secreted. In terms of biological role, promotes the cis-splicing and editing of several mitochondrial RNAs (including NAD5 transcripts). Plays a role in RNA transcription or processing during stress. Binds RNAs and DNAs sequence with a preference to single-stranded nucleic acids. Displays strong affinity to poly(U) sequence. Exerts cold and freezing tolerance, probably by exhibiting an RNA chaperone activity during the cold and freezing adaptation process. Mediates cell-to-cell trafficking of RNA interference (RNAi) signals (small RNAs (sRNA), e.g. small interfering RNA (siRNA) and microRNA (miRNA)) which regulate growth and development, as well as responses to environmental inputs, including pathogen attack; can compromise zucchini yellow mosaic virus (ZYMV) and tobacco rattle virus (TRV) infections at the early stage. This chain is Glycine-rich RNA-binding protein 2, mitochondrial, found in Arabidopsis thaliana (Mouse-ear cress).